Reading from the N-terminus, the 85-residue chain is Elongation factor 1-beta (85 aa).

Belongs to the EF-1-beta/EF-1-delta family.

Its function is as follows. Promotes the exchange of GDP for GTP in EF-1-alpha/GDP, thus allowing the regeneration of EF-1-alpha/GTP that could then be used to form the ternary complex EF-1-alpha/GTP/AAtRNA. The sequence is that of Elongation factor 1-beta from Methanospirillum hungatei JF-1 (strain ATCC 27890 / DSM 864 / NBRC 100397 / JF-1).